The primary structure comprises 245 residues: 5-oxoprolinase subunit A (245 aa).

Belongs to the LamB/PxpA family. As to quaternary structure, forms a complex composed of PxpA, PxpB and PxpC.

It catalyses the reaction 5-oxo-L-proline + ATP + 2 H2O = L-glutamate + ADP + phosphate + H(+). In terms of biological role, catalyzes the cleavage of 5-oxoproline to form L-glutamate coupled to the hydrolysis of ATP to ADP and inorganic phosphate. The sequence is that of 5-oxoprolinase subunit A from Haemophilus influenzae (strain PittGG).